Here is a 306-residue protein sequence, read N- to C-terminus: Ornithine carbamoyltransferase (306 aa).

Carbamoyl phosphate-binding positions include 46-49, Q73, R97, and 124-127; these read STRT and HPTQ. L-ornithine contacts are provided by residues N156, D220, and 224 to 225; that span reads SM. Residues 260–261 and R288 contribute to the carbamoyl phosphate site; that span reads CL.

It belongs to the aspartate/ornithine carbamoyltransferase superfamily. OTCase family.

Its subcellular location is the cytoplasm. It catalyses the reaction carbamoyl phosphate + L-ornithine = L-citrulline + phosphate + H(+). It functions in the pathway amino-acid biosynthesis; L-arginine biosynthesis; L-arginine from L-ornithine and carbamoyl phosphate: step 1/3. Functionally, reversibly catalyzes the transfer of the carbamoyl group from carbamoyl phosphate (CP) to the N(epsilon) atom of ornithine (ORN) to produce L-citrulline. The chain is Ornithine carbamoyltransferase from Campylobacter jejuni (strain RM1221).